Here is a 99-residue protein sequence, read N- to C-terminus: NADH-quinone oxidoreductase subunit K (99 aa).

Transmembrane regions (helical) follow at residues 3 to 23 (LVNYLVLSGLLFTIGAATVLV), 28 to 48 (IIMFMGVELMLNASNLAFVAF), and 59 to 79 (VVAFFVMVVAAAEVVVGLAII).

It belongs to the complex I subunit 4L family. NDH-1 is composed of 14 different subunits. Subunits NuoA, H, J, K, L, M, N constitute the membrane sector of the complex.

The protein resides in the cell membrane. It carries out the reaction a quinone + NADH + 5 H(+)(in) = a quinol + NAD(+) + 4 H(+)(out). Its function is as follows. NDH-1 shuttles electrons from NADH, via FMN and iron-sulfur (Fe-S) centers, to quinones in the respiratory chain. The immediate electron acceptor for the enzyme in this species is believed to be a menaquinone. Couples the redox reaction to proton translocation (for every two electrons transferred, four hydrogen ions are translocated across the cytoplasmic membrane), and thus conserves the redox energy in a proton gradient. The chain is NADH-quinone oxidoreductase subunit K from Beutenbergia cavernae (strain ATCC BAA-8 / DSM 12333 / CCUG 43141 / JCM 11478 / NBRC 16432 / NCIMB 13614 / HKI 0122).